Here is a 229-residue protein sequence, read N- to C-terminus: Purine nucleoside phosphorylase BB_0467 (229 aa).

The Zn(2+) site is built by H55, C91, and H108.

It belongs to the purine nucleoside phosphorylase YfiH/LACC1 family. In terms of assembly, homodimer. Cu(2+) is required as a cofactor. The cofactor is Zn(2+).

It catalyses the reaction adenosine + phosphate = alpha-D-ribose 1-phosphate + adenine. The enzyme catalyses S-methyl-5'-thioadenosine + phosphate = 5-(methylsulfanyl)-alpha-D-ribose 1-phosphate + adenine. The catalysed reaction is inosine + phosphate = alpha-D-ribose 1-phosphate + hypoxanthine. It carries out the reaction adenosine + H2O + H(+) = inosine + NH4(+). Purine nucleoside enzyme that catalyzes the phosphorolysis of adenosine and inosine nucleosides, yielding D-ribose 1-phosphate and the respective free bases, adenine and hypoxanthine. Also catalyzes the phosphorolysis of S-methyl-5'-thioadenosine into adenine and S-methyl-5-thio-alpha-D-ribose 1-phosphate. Also has adenosine deaminase activity. The polypeptide is Purine nucleoside phosphorylase BB_0467 (Borreliella burgdorferi (strain ATCC 35210 / DSM 4680 / CIP 102532 / B31) (Borrelia burgdorferi)).